We begin with the raw amino-acid sequence, 299 residues long: DNA repair protein RecO (299 aa).

The segment at 1–62 (MTLNSDADPD…GRRAPRTPAS (62 aa)) is disordered. Residues 25–41 (ASKPARSTRKSSSAKSA) are compositionally biased toward low complexity.

Belongs to the RecO family.

Functionally, involved in DNA repair and RecF pathway recombination. This Paraburkholderia xenovorans (strain LB400) protein is DNA repair protein RecO.